The primary structure comprises 214 residues: Protein GrpE (214 aa).

The segment covering methionine 1–threonine 13 has biased composition (polar residues). Residues methionine 1 to proline 61 form a disordered region. A compositionally biased stretch (low complexity) spans glutamine 14–alanine 57.

Belongs to the GrpE family. As to quaternary structure, homodimer.

The protein localises to the cytoplasm. In terms of biological role, participates actively in the response to hyperosmotic and heat shock by preventing the aggregation of stress-denatured proteins, in association with DnaK and GrpE. It is the nucleotide exchange factor for DnaK and may function as a thermosensor. Unfolded proteins bind initially to DnaJ; upon interaction with the DnaJ-bound protein, DnaK hydrolyzes its bound ATP, resulting in the formation of a stable complex. GrpE releases ADP from DnaK; ATP binding to DnaK triggers the release of the substrate protein, thus completing the reaction cycle. Several rounds of ATP-dependent interactions between DnaJ, DnaK and GrpE are required for fully efficient folding. The polypeptide is Protein GrpE (Ralstonia nicotianae (strain ATCC BAA-1114 / GMI1000) (Ralstonia solanacearum)).